A 425-amino-acid polypeptide reads, in one-letter code: Histidine--tRNA ligase (425 aa).

This sequence belongs to the class-II aminoacyl-tRNA synthetase family. Homodimer.

It is found in the cytoplasm. The catalysed reaction is tRNA(His) + L-histidine + ATP = L-histidyl-tRNA(His) + AMP + diphosphate + H(+). This chain is Histidine--tRNA ligase, found in Aeromonas salmonicida (strain A449).